The sequence spans 228 residues: Octanoyltransferase (228 aa).

In terms of domain architecture, BPL/LPL catalytic spans 32–214; that stretch reads DVVPDTVLLV…HLRRLFERDW (183 aa). Residues 77–84, 144–146, and 157–159 each bind substrate; these read RGGDVTYH, SVG, and GIA. Catalysis depends on Cys-175, which acts as the Acyl-thioester intermediate.

It belongs to the LipB family.

Its subcellular location is the cytoplasm. It carries out the reaction octanoyl-[ACP] + L-lysyl-[protein] = N(6)-octanoyl-L-lysyl-[protein] + holo-[ACP] + H(+). The protein operates within protein modification; protein lipoylation via endogenous pathway; protein N(6)-(lipoyl)lysine from octanoyl-[acyl-carrier-protein]: step 1/2. In terms of biological role, catalyzes the transfer of endogenously produced octanoic acid from octanoyl-acyl-carrier-protein onto the lipoyl domains of lipoate-dependent enzymes. Lipoyl-ACP can also act as a substrate although octanoyl-ACP is likely to be the physiological substrate. In Syntrophobacter fumaroxidans (strain DSM 10017 / MPOB), this protein is Octanoyltransferase.